Here is a 562-residue protein sequence, read N- to C-terminus: Potassium-transporting ATPase potassium-binding subunit (562 aa).

Transmembrane regions (helical) follow at residues 6–26, 63–83, 132–152, 175–195, 253–273, 283–303, 327–347, 356–376, 379–399, 416–436, 483–503, and 526–546; these read FLLI…LGSF, ALAI…LLMM, GLTV…FALI, LYVL…QGVL, FVQM…FGQV, LIWA…YAEL, FGIL…CGAV, ALGG…FGGV, GLYG…LMIG, MTAL…ALAL, LLLA…VLAI, and LFIG…FIPA.

The protein belongs to the KdpA family. As to quaternary structure, the system is composed of three essential subunits: KdpA, KdpB and KdpC.

It is found in the cell inner membrane. Functionally, part of the high-affinity ATP-driven potassium transport (or Kdp) system, which catalyzes the hydrolysis of ATP coupled with the electrogenic transport of potassium into the cytoplasm. This subunit binds the periplasmic potassium ions and delivers the ions to the membrane domain of KdpB through an intramembrane tunnel. The chain is Potassium-transporting ATPase potassium-binding subunit from Yersinia enterocolitica serotype O:8 / biotype 1B (strain NCTC 13174 / 8081).